Reading from the N-terminus, the 166-residue chain is Large ribosomal subunit protein uL11 (166 aa).

This sequence belongs to the universal ribosomal protein uL11 family.

Its function is as follows. This protein binds directly to 26S ribosomal RNA. This Prunus armeniaca (Apricot) protein is Large ribosomal subunit protein uL11 (RPL12).